Here is a 254-residue protein sequence, read N- to C-terminus: Glutamate racemase (254 aa).

Residues 7-8 (DS) and 39-40 (YG) each bind substrate. Cys-70 (proton donor/acceptor) is an active-site residue. Substrate is bound at residue 71 to 72 (NT). Cys-178 (proton donor/acceptor) is an active-site residue. Substrate is bound at residue 179–180 (TH).

This sequence belongs to the aspartate/glutamate racemases family.

The enzyme catalyses L-glutamate = D-glutamate. The protein operates within cell wall biogenesis; peptidoglycan biosynthesis. In terms of biological role, provides the (R)-glutamate required for cell wall biosynthesis. In Aquifex aeolicus (strain VF5), this protein is Glutamate racemase.